The chain runs to 288 residues: Energy-coupling factor transporter ATP-binding protein EcfA2 (288 aa).

The ABC transporter domain maps to 3–245; the sequence is IIVKNLTHIY…NASKLKDIGL (243 aa). ATP is bound at residue 40-47; that stretch reads GHTGSGKS.

This sequence belongs to the ABC transporter superfamily. Energy-coupling factor EcfA family. As to quaternary structure, forms a stable energy-coupling factor (ECF) transporter complex composed of 2 membrane-embedded substrate-binding proteins (S component), 2 ATP-binding proteins (A component) and 2 transmembrane proteins (T component).

Its subcellular location is the cell membrane. Its function is as follows. ATP-binding (A) component of a common energy-coupling factor (ECF) ABC-transporter complex. Unlike classic ABC transporters this ECF transporter provides the energy necessary to transport a number of different substrates. The polypeptide is Energy-coupling factor transporter ATP-binding protein EcfA2 (Clostridioides difficile (strain 630) (Peptoclostridium difficile)).